The chain runs to 490 residues: MEHRIFGIESEFGLSYVPHGLGRLSIEESAAALFKPVLDQWRSTNVFLPNGGRLYLDVGSHPEYASAECGSIDELLAQERAGELLFADLARTARKRLLAGSEGRPLDGELYLFKNNVDSAGNSYGSHENYLISRKLQFNDLIAQLVPFLVTRQILVGAGKTHPNGGPVPGSTDPASSTGVPSYSFSQRADHIWEAASTSTSRARPLINTRDEPHADASKFRRMHVINGDSNMAEPTTLLKIASTDLVLRMLEDRFPVTSLDIVSVPAALRAISHDLTGTATFETTDGKHYTALSVQRHYLDAARQYVQQYGAHHHHVEYALDLWQRTLDAIESGDYSSIDSEIDWAIKKKLLDAYIARARAAGQPADYASARIRQLDLAYHDIDPERSVFHALVRRGAVKRILPEGAAEAAKTQPPNTRALQRSRFINAAVAAGEQFTVDWVHLKLNAYPQHTLVCKDPFATDSEGLEEVLTLLEGKARQHQEAAFPPPC.

E9 contributes to the Mg(2+) binding site. R53 serves as a coordination point for ATP. Residue Y55 participates in Mg(2+) binding. The active-site Proton acceptor is D57. A Mg(2+)-binding site is contributed by E63. S66 provides a ligand contact to ATP. A disordered region spans residues K160–P181. W441 is an ATP binding site.

This sequence belongs to the Pup ligase/Pup deamidase family. Pup-conjugating enzyme subfamily.

The enzyme catalyses ATP + [prokaryotic ubiquitin-like protein]-L-glutamate + [protein]-L-lysine = ADP + phosphate + N(6)-([prokaryotic ubiquitin-like protein]-gamma-L-glutamyl)-[protein]-L-lysine.. Its pathway is protein degradation; proteasomal Pup-dependent pathway. It functions in the pathway protein modification; protein pupylation. Functionally, catalyzes the covalent attachment of the prokaryotic ubiquitin-like protein modifier Pup to the proteasomal substrate proteins, thereby targeting them for proteasomal degradation. This tagging system is termed pupylation. The ligation reaction involves the side-chain carboxylate of the C-terminal glutamate of Pup and the side-chain amino group of a substrate lysine. The polypeptide is Pup--protein ligase (Rothia mucilaginosa (strain DY-18) (Stomatococcus mucilaginosus)).